The chain runs to 912 residues: Coatomer subunit beta (912 aa).

HEAT repeat units lie at residues 59–96, 100–135, 136–172, 244–281, 300–337, 339–375, 397–434, 441–479, 550–575, and 576–612; these read PIPQLLMPIILYVMPSNDHTIKKLLLIYWEVIEKTHLG, SEMILVCNSLLNDLNHPNEFVRGSTLRFLCKLREAE, VLEPLVPSVRSNLENRHAYCRRNAVLAIYNIYSHFDY, SERSKYIKCIFTLLNSSSPAVKYESAGTLLSLSSAPTA, NVKMIVLDKLIEIKKNHSKIMEELVMDILRALSSPNID, CKKVLNIVLDSVTPKNIDEIILFLKKEINKTQSKEFD, EVLGNVVPLLMEYLGDSYLPSAVDVVIFLREVVETYPS, KKLIENLSSIKVSKVYRVAVWVIAEYVTCLEDLQYAMTS, LKAQVMMIISVLINLSKASQVSTSKS, and AYERMLSCIQVLIDSNATIKKIWLQDCRDSFANYLKY.

Oligomeric complex that consists of at least the alpha, beta, beta', gamma, delta, epsilon and zeta subunits.

It localises to the cytoplasm. The protein resides in the golgi apparatus membrane. Its subcellular location is the cytoplasmic vesicle. The protein localises to the COPI-coated vesicle membrane. In terms of biological role, the coatomer is a cytosolic protein complex that binds to dilysine motifs and reversibly associates with Golgi non-clathrin-coated vesicles, which further mediate biosynthetic protein transport from the ER, via the Golgi up to the trans Golgi network. Coatomer complex is required for budding from Golgi membranes, and is essential for the retrograde Golgi-to-ER transport of dilysine-tagged proteins. This Dictyostelium discoideum (Social amoeba) protein is Coatomer subunit beta (copb).